A 386-amino-acid polypeptide reads, in one-letter code: Outer membrane protein assembly factor BamB (386 aa).

A signal peptide spans 1-25; the sequence is MMRNSRPGRAWRGAVVLTGLLALSG. Cys26 carries N-palmitoyl cysteine lipidation. Residue Cys26 is the site of S-diacylglycerol cysteine attachment.

This sequence belongs to the BamB family. Part of the Bam complex.

Its subcellular location is the cell outer membrane. In terms of biological role, part of the outer membrane protein assembly complex, which is involved in assembly and insertion of beta-barrel proteins into the outer membrane. This Bordetella pertussis (strain Tohama I / ATCC BAA-589 / NCTC 13251) protein is Outer membrane protein assembly factor BamB.